A 166-amino-acid chain; its full sequence is Cofilin-1 (166 aa).

Ala2 is modified (N-acetylalanine). 2 positions are modified to phosphoserine: Ser3 and Ser8. An ADF-H domain is found at 4-153 (GVAVSDGVIK…KDRCTLAEKL (150 aa)). Residue Lys13 is modified to N6-acetyllysine. The residue at position 25 (Thr25) is a Phosphothreonine. A Nuclear localization signal motif is present at residues 30–34 (KKRKK). The residue at position 41 (Ser41) is a Phosphoserine. A Phosphotyrosine modification is found at Tyr68. N6-acetyllysine is present on Lys73. Lys132 participates in a covalent cross-link: Glycyl lysine isopeptide (Lys-Gly) (interchain with G-Cter in SUMO2). At Tyr140 the chain carries Phosphotyrosine. Lys144 carries the post-translational modification N6-acetyllysine. Ser156 carries the post-translational modification Phosphoserine.

It belongs to the actin-binding proteins ADF family. Can bind G- and F-actin in a 1:1 ratio of cofilin to actin. It is a major component of intranuclear and cytoplasmic actin rods. Interacts with the subcortical maternal complex (SCMC) via interaction with TLE6 and NLRP5. Interacts with C9orf72. Post-translationally, inactivated by phosphorylation on Ser-3. Phosphorylated on Ser-3 in resting cells. Dephosphorylated by PDXP/chronophin; this restores its activity in promoting actin filament depolymerization. The phosphorylation of Ser-24 may prevent recognition of the nuclear localization signal. Phosphorylated via a ARRB1-RAC1-LIMK1-PAK1 cascade upon active ligand stimulation of atypical chemokine receptor ACKR2.

The protein resides in the nucleus matrix. The protein localises to the cytoplasm. Its subcellular location is the cytoskeleton. It localises to the cell projection. It is found in the ruffle membrane. The protein resides in the lamellipodium membrane. The protein localises to the lamellipodium. Its subcellular location is the growth cone. It localises to the axon. Its function is as follows. Binds to F-actin and exhibits pH-sensitive F-actin depolymerizing activity. Important for normal progress through mitosis and normal cytokinesis. In conjunction with the subcortical maternal complex (SCMC), plays an essential role for zygotes to progress beyond the first embryonic cell divisions via regulation of actin dynamics. Required for the centralization of the mitotic spindle and symmetric division of zygotes. Plays a role in the regulation of cell morphology and cytoskeletal organization in epithelial cells. Required for the up-regulation of atypical chemokine receptor ACKR2 from endosomal compartment to cell membrane, increasing its efficiency in chemokine uptake and degradation. Required for neural tube morphogenesis and neural crest cell migration. This Bos taurus (Bovine) protein is Cofilin-1 (CFL1).